Reading from the N-terminus, the 490-residue chain is Bifunctional protein HldE (490 aa).

Residues 1 to 330 (MDRTNIENFL…EAMAHHALEY (330 aa)) are ribokinase. 205 to 208 (NRKE) lines the ATP pocket. The active site involves Asp-275. Positions 356-490 (FTNGCFDLLH…ERILDRYEQG (135 aa)) are cytidylyltransferase.

The protein in the N-terminal section; belongs to the carbohydrate kinase PfkB family. It in the C-terminal section; belongs to the cytidylyltransferase family. In terms of assembly, homodimer.

The catalysed reaction is D-glycero-beta-D-manno-heptose 7-phosphate + ATP = D-glycero-beta-D-manno-heptose 1,7-bisphosphate + ADP + H(+). It catalyses the reaction D-glycero-beta-D-manno-heptose 1-phosphate + ATP + H(+) = ADP-D-glycero-beta-D-manno-heptose + diphosphate. It participates in nucleotide-sugar biosynthesis; ADP-L-glycero-beta-D-manno-heptose biosynthesis; ADP-L-glycero-beta-D-manno-heptose from D-glycero-beta-D-manno-heptose 7-phosphate: step 1/4. Its pathway is nucleotide-sugar biosynthesis; ADP-L-glycero-beta-D-manno-heptose biosynthesis; ADP-L-glycero-beta-D-manno-heptose from D-glycero-beta-D-manno-heptose 7-phosphate: step 3/4. In terms of biological role, catalyzes the phosphorylation of D-glycero-D-manno-heptose 7-phosphate at the C-1 position to selectively form D-glycero-beta-D-manno-heptose-1,7-bisphosphate. Its function is as follows. Catalyzes the ADP transfer from ATP to D-glycero-beta-D-manno-heptose 1-phosphate, yielding ADP-D-glycero-beta-D-manno-heptose. The polypeptide is Bifunctional protein HldE (Syntrophotalea carbinolica (strain DSM 2380 / NBRC 103641 / GraBd1) (Pelobacter carbinolicus)).